Reading from the N-terminus, the 106-residue chain is UPF0145 protein PFL_3418 (106 aa).

The protein belongs to the UPF0145 family.

The protein is UPF0145 protein PFL_3418 of Pseudomonas fluorescens (strain ATCC BAA-477 / NRRL B-23932 / Pf-5).